Here is a 121-residue protein sequence, read N- to C-terminus: Large ribosomal subunit protein bL12 (121 aa).

This sequence belongs to the bacterial ribosomal protein bL12 family. As to quaternary structure, homodimer. Part of the ribosomal stalk of the 50S ribosomal subunit. Forms a multimeric L10(L12)X complex, where L10 forms an elongated spine to which 2 to 4 L12 dimers bind in a sequential fashion. Binds GTP-bound translation factors.

In terms of biological role, forms part of the ribosomal stalk which helps the ribosome interact with GTP-bound translation factors. Is thus essential for accurate translation. This Shewanella baltica (strain OS185) protein is Large ribosomal subunit protein bL12.